A 394-amino-acid chain; its full sequence is 4-hydroxybenzoate 3-monooxygenase (NAD(P)H) (394 aa).

FAD is bound by residues glutamate 32, 42 to 47 (TIRAGV), and glutamine 102. Residues tyrosine 203, 214 to 216 (STR), and tyrosine 224 each bind substrate. Aspartate 288 serves as a coordination point for FAD. Proline 295 provides a ligand contact to substrate. 301-302 (LN) is a binding site for FAD.

It belongs to the aromatic-ring hydroxylase family. It depends on FAD as a cofactor.

It carries out the reaction 4-hydroxybenzoate + NADH + O2 + H(+) = 3,4-dihydroxybenzoate + NAD(+) + H2O. It catalyses the reaction 4-hydroxybenzoate + NADPH + O2 + H(+) = 3,4-dihydroxybenzoate + NADP(+) + H2O. Its function is as follows. Involved in the degradation of 4-hydroxybenzoate (4HB) via the protocatechuate (PCA) 2,3-cleavage pathway. Catalyzes the conversion of 4HB into 2-hydroxypenta-2,4-dienoate (HPD). It is highly specific for 4-hydroxybenzoate, and is able to utilize both NADH and NADPH as electron donors at approximately equal rates. In Paenibacillus sp, this protein is 4-hydroxybenzoate 3-monooxygenase (NAD(P)H) (praI).